The sequence spans 895 residues: Androgen receptor (895 aa).

Residues 1–533 are modulating; the sequence is MEVQLGLGRV…PIDYYFPPQK (533 aa). Positions 1–562 are interaction with ZNF318; that stretch reads MEVQLGLGRV…GSCKVFFKRA (562 aa). Disordered stretches follow at residues 33-150 and 175-211; these read VIQN…LSLL and QLLQ…YLGG. Composition is skewed to low complexity over residues 44 to 81 and 175 to 200; these read AASA…GSPQ and QLLQ…ASGA. Position 65 is a phosphoserine; by CDK9 (Ser-65). Ser-79 bears the Phosphoserine mark. Positions 201-211 are enriched in polar residues; it reads PTSSKDNYLGG. Phosphotyrosine; by CSK is present on Tyr-208. Residue Ser-241 is modified to Phosphoserine. Tyr-252 is modified (phosphotyrosine; by CSK and TNK2). Phosphotyrosine; by CSK is present on residues Tyr-292, Tyr-331, Tyr-342, and Tyr-347. Position 348 is a phosphotyrosine; by CSK and TNK2 (Tyr-348). Residue Lys-371 forms a Glycyl lysine isopeptide (Lys-Gly) (interchain with G-Cter in SUMO) linkage. Tyr-378 bears the Phosphotyrosine; by CSK mark. Lys-496 participates in a covalent cross-link: Glycyl lysine isopeptide (Lys-Gly) (interchain with G-Cter in SUMO). Phosphotyrosine; by CSK is present on residues Tyr-510 and Tyr-527. The tract at residues 527 to 894 is interaction with LPXN; that stretch reads YYFPPQKTCL…GKVKPIYFHT (368 aa). The segment at residues 534–607 is a DNA-binding region (nuclear receptor); it reads TCLICGDEAS…AGMTLGARKL (74 aa). 2 NR C4-type zinc fingers span residues 535–555 and 571–595; these read CLIC…CGSC and CASR…LRKC. The tract at residues 547–637 is interaction with HIPK3; sequence YGALTCGSCK…TEETAQKLTV (91 aa). The interaction with CCAR1 stretch occupies residues 567–894; that stretch reads QKYLCASRND…GKVKPIYFHT (328 aa). Residues 600–894 form an interaction with KAT7 region; it reads MTLGARKLKK…GKVKPIYFHT (295 aa). Ser-626 is modified (phosphoserine; by STK4/MST1). Positions 644 to 875 constitute an NR LBD domain; the sequence is ECQPIFLNVL…DFPEMMAEII (232 aa). 2 residues coordinate 17beta-hydroxy-5alpha-androstan-3-one: Asn-681 and Arg-728. Glycyl lysine isopeptide (Lys-Gly) (interchain with G-Cter in ubiquitin) cross-links involve residues Lys-821 and Lys-823. A 17beta-hydroxy-5alpha-androstan-3-one-binding site is contributed by Thr-853. Tyr-891 is modified (phosphotyrosine; by CSK).

This sequence belongs to the nuclear hormone receptor family. NR3 subfamily. In terms of assembly, binds DNA as a homodimer. Part of a ternary complex containing AR, EFCAB6/DJBP and PARK7. Interacts with HIPK3 and NR0B2 in the presence of androgen. The ligand binding domain interacts with KAT7/HBO1 in the presence of dihydrotestosterone. Interacts with EFCAB6/DJBP, PQBP1, RANBP9, RBAK, SPDEF, SRA1, TGFB1I1 and RREB1. Interacts with ZMIZ1/ZIMP10 and ZMIZ2/ZMIP7 which both enhance its transactivation activity. Interacts with SLC30A9 and RAD54L2/ARIP4. Interacts with MACROD1 (via macro domain). Interacts via the ligand-binding domain with LXXLL and FXXLF motifs from NCOA1, NCOA2, NCOA3 and MAGEA11. Interacts (via nuclear receptor DNA binding domain and nuclear receptor ligand binding domain) with NCOA4. The AR N-terminal poly-Gln region binds Ran resulting in enhancement of AR-mediated transactivation. Ran-binding decreases as the poly-Gln length increases. Interacts with HIP1 (via coiled coil domain). Interacts (via ligand-binding domain) with TRIM68. Interacts with TNK2. Interacts with USP26. Interacts with RNF6. Interacts (regulated by RNF6 probably through polyubiquitination) with RNF14; regulates AR transcriptional activity. Interacts with PRMT2 and TRIM24. Interacts with RACK1. Interacts with RANBP10; this interaction enhances dihydrotestosterone-induced AR transcriptional activity. Interacts with PRPF6 in a hormone-independent way; this interaction enhances dihydrotestosterone-induced AR transcriptional activity. Interacts with STK4/MST1. Interacts with ZIPK/DAPK3. Interacts with LPXN. Interacts with MAK. Part of a complex containing AR, MAK and NCOA3. Interacts with CRY1. Interacts with CCAR1 and GATA2. Interacts with ZNF318. Interacts with BUD31. Interacts with ARID4A. Interacts with ARID4B. Interacts (via NR LBD domain) with ZBTB7A; the interaction is direct and androgen-dependent. Interacts with NCOR1. Interacts with NCOR2. Interacts with CRY2 in a ligand-dependent manner. Post-translationally, phosphorylated in prostate cancer cells in response to several growth factors including EGF. Phosphorylation is induced by c-Src kinase (CSK). Tyr-510 is one of the major phosphorylation sites and an increase in phosphorylation and Src kinase activity is associated with prostate cancer progression. Phosphorylation by TNK2 enhances the DNA-binding and transcriptional activity. Phosphorylation at Ser-65 by CDK9 regulates AR promoter selectivity and cell growth. In terms of processing, sumoylated on Lys-371 (major) and Lys-496. Ubiquitinated. Deubiquitinated by USP26. 'Lys-6' and 'Lys-27'-linked polyubiquitination by RNF6 modulates AR transcriptional activity and specificity. Palmitoylated by ZDHHC7 and ZDHHC21. Palmitoylation is required for plasma membrane targeting and for rapid intracellular signaling via ERK and AKT kinases and cAMP generation.

Its subcellular location is the nucleus. It is found in the cytoplasm. Its function is as follows. Steroid hormone receptors are ligand-activated transcription factors that regulate eukaryotic gene expression and affect cellular proliferation and differentiation in target tissues. Transcription factor activity is modulated by bound coactivator and corepressor proteins like ZBTB7A that recruits NCOR1 and NCOR2 to the androgen response elements/ARE on target genes, negatively regulating androgen receptor signaling and androgen-induced cell proliferation. Transcription activation is also down-regulated by NR0B2. Activated, but not phosphorylated, by HIPK3 and ZIPK/DAPK3. This chain is Androgen receptor (AR), found in Macaca fascicularis (Crab-eating macaque).